Here is a 221-residue protein sequence, read N- to C-terminus: UPF0758 protein ECA0145 (221 aa).

An MPN domain is found at 99-221 (AMLNPEATGQ…FVSFAERGWI (123 aa)). Positions 170, 172, and 183 each coordinate Zn(2+). The short motif at 170-183 (HNHPSGKAEPSQAD) is the JAMM motif element.

This sequence belongs to the UPF0758 family. YicR subfamily.

This chain is UPF0758 protein ECA0145, found in Pectobacterium atrosepticum (strain SCRI 1043 / ATCC BAA-672) (Erwinia carotovora subsp. atroseptica).